The following is a 921-amino-acid chain: Levanase (921 aa).

The signal sequence occupies residues 1-23 (MMKWFAKLILSLSLAVVMAASSA). Residues 409–412 (SASD), Gln428, 460–461 (WS), 539–540 (RD), Glu591, and Trp679 contribute to the substrate site. Asp412 is an active-site residue.

This sequence belongs to the glycosyl hydrolase 32 family.

It localises to the secreted. It catalyses the reaction Random hydrolysis of (2-&gt;6)-beta-D-fructofuranosidic linkages in (2-&gt;6)-beta-D-fructans (levans) containing more than 3 fructose units.. Its activity is regulated as follows. Is completely inhibited by low concentrations of heavy metal ions, while Ca(2+) and Mg(2+) or chelating agents such as EDTA neither inhibit nor activate the enzyme to any significant extent. Functionally, catalyzes the hydrolysis of levan with endo-type specificity. The products of levan hydrolysis are a mixture of fructose and a series of fructooligosaccharides up to 12-mer, with levantriose being the major oligosaccharide obtained. Is not active towards sucrose. The protein is Levanase of Bacillus sp. (strain L7).